Here is a 238-residue protein sequence, read N- to C-terminus: MTPHISAKKDDISKVVLMPGDPLRAKWIAEQFLDQAKLVNEVRGMFAYTGQYKSKTVTVMGHGMGIPSIGIYSYELMNFYEVETIIRIGSCGALAPQLKLKDLVIASKAWSESIYAKDMGVEIPEDKILFATSSLVELAKETAIKNKLDFHEGLVFCEDAFYQTRKDVISLAKEKNSLAVEMEAHALYANAILLKKKALTLLTVSDSLVTHEALSSELRQKSFKQMALLALEMTQKLI.

His-4 serves as a coordination point for a purine D-ribonucleoside. Phosphate contacts are provided by residues Gly-20, Arg-24, Arg-43, and 87–90 (RIGS). A purine D-ribonucleoside-binding positions include 181 to 183 (EME) and 205 to 206 (SD). Catalysis depends on Asp-206, which acts as the Proton donor.

This sequence belongs to the PNP/UDP phosphorylase family. As to quaternary structure, homohexamer; trimer of homodimers.

The catalysed reaction is a purine D-ribonucleoside + phosphate = a purine nucleobase + alpha-D-ribose 1-phosphate. The enzyme catalyses a purine 2'-deoxy-D-ribonucleoside + phosphate = a purine nucleobase + 2-deoxy-alpha-D-ribose 1-phosphate. Its function is as follows. Catalyzes the reversible phosphorolytic breakdown of the N-glycosidic bond in the beta-(deoxy)ribonucleoside molecules, with the formation of the corresponding free purine bases and pentose-1-phosphate. The sequence is that of Purine nucleoside phosphorylase DeoD-type from Mycoplasma genitalium (strain ATCC 33530 / DSM 19775 / NCTC 10195 / G37) (Mycoplasmoides genitalium).